The following is a 465-amino-acid chain: NADH-quinone oxidoreductase subunit N (465 aa).

Transmembrane regions (helical) follow at residues 6–26 (ILPETFSIISSLVLLLLGIVF), 30–50 (TINLLALGCTVITLIILILSA), 66–86 (LYIRSAQGLILIAGILVLLLL), 98–118 (SILILFTLFGMITLVSANNLI), 156–176 (ALSSCIMLYGMSLLYGYTGLV), 194–214 (IVFGLVLILIGLCFKLAIAPF), 226–246 (PTIVTAFFSTVPKAALVTFLI), 261–281 (FQPVLLYISALSVLISAFGAL), 289–309 (LLAYSSIGHIGFILASLSIFT), 317–337 (LIYLVIYIITNIGLFSYFIQI), 363–383 (ILLFSMAGIPPLAGFFAKLFI), 391–411 (GFIGMSLIFIVASVISCYYYL), and 432–452 (SLFIVTSVASLINIVLFMCVE).

It belongs to the complex I subunit 2 family. In terms of assembly, NDH-1 is composed of 14 different subunits. Subunits NuoA, H, J, K, L, M, N constitute the membrane sector of the complex.

The protein localises to the cell membrane. The enzyme catalyses a quinone + NADH + 5 H(+)(in) = a quinol + NAD(+) + 4 H(+)(out). Its function is as follows. NDH-1 shuttles electrons from NADH, via FMN and iron-sulfur (Fe-S) centers, to quinones in the respiratory chain. The immediate electron acceptor for the enzyme in this species is believed to be ubiquinone. Couples the redox reaction to proton translocation (for every two electrons transferred, four hydrogen ions are translocated across the cytoplasmic membrane), and thus conserves the redox energy in a proton gradient. The protein is NADH-quinone oxidoreductase subunit N of Wolbachia sp. subsp. Brugia malayi (strain TRS).